The sequence spans 100 residues: Small ribosomal subunit protein uS14c (100 aa).

This sequence belongs to the universal ribosomal protein uS14 family. Part of the 30S ribosomal subunit.

Its subcellular location is the plastid. It localises to the chloroplast. Its function is as follows. Binds 16S rRNA, required for the assembly of 30S particles. The protein is Small ribosomal subunit protein uS14c of Morus indica (Mulberry).